Consider the following 264-residue polypeptide: Thymidylate synthase (264 aa).

Arginine 21 provides a ligand contact to dUMP. Histidine 51 lines the (6R)-5,10-methylene-5,6,7,8-tetrahydrofolate pocket. Arginine 126 to arginine 127 is a dUMP binding site. Cysteine 146 (nucleophile) is an active-site residue. DUMP contacts are provided by residues arginine 166–aspartate 169, asparagine 177, and histidine 207–tyrosine 209. (6R)-5,10-methylene-5,6,7,8-tetrahydrofolate is bound at residue aspartate 169. Residue serine 263 participates in (6R)-5,10-methylene-5,6,7,8-tetrahydrofolate binding.

This sequence belongs to the thymidylate synthase family. Bacterial-type ThyA subfamily. In terms of assembly, homodimer.

The protein resides in the cytoplasm. The catalysed reaction is dUMP + (6R)-5,10-methylene-5,6,7,8-tetrahydrofolate = 7,8-dihydrofolate + dTMP. It functions in the pathway pyrimidine metabolism; dTTP biosynthesis. Catalyzes the reductive methylation of 2'-deoxyuridine-5'-monophosphate (dUMP) to 2'-deoxythymidine-5'-monophosphate (dTMP) while utilizing 5,10-methylenetetrahydrofolate (mTHF) as the methyl donor and reductant in the reaction, yielding dihydrofolate (DHF) as a by-product. This enzymatic reaction provides an intracellular de novo source of dTMP, an essential precursor for DNA biosynthesis. The protein is Thymidylate synthase of Laribacter hongkongensis (strain HLHK9).